The chain runs to 229 residues: 2-C-methyl-D-erythritol 4-phosphate cytidylyltransferase (229 aa).

Belongs to the IspD/TarI cytidylyltransferase family. IspD subfamily.

It carries out the reaction 2-C-methyl-D-erythritol 4-phosphate + CTP + H(+) = 4-CDP-2-C-methyl-D-erythritol + diphosphate. It participates in isoprenoid biosynthesis; isopentenyl diphosphate biosynthesis via DXP pathway; isopentenyl diphosphate from 1-deoxy-D-xylulose 5-phosphate: step 2/6. Functionally, catalyzes the formation of 4-diphosphocytidyl-2-C-methyl-D-erythritol from CTP and 2-C-methyl-D-erythritol 4-phosphate (MEP). The sequence is that of 2-C-methyl-D-erythritol 4-phosphate cytidylyltransferase from Bacillus pumilus (strain SAFR-032).